The primary structure comprises 125 residues: Histone H2A, orphon (125 aa).

Basic residues predominate over residues 1-18 (MSGRGKGGKVKAKAKSRS). The disordered stretch occupies residues 1–21 (MSGRGKGGKVKAKAKSRSSRA). Serine 2 is subject to N-acetylserine. Serine 2 is modified (phosphoserine). A Glycyl lysine isopeptide (Lys-Gly) (interchain with G-Cter in ubiquitin) cross-link involves residue lysine 119.

Belongs to the histone H2A family. As to quaternary structure, the nucleosome is a histone octamer containing two molecules each of H2A, H2B, H3 and H4 assembled in one H3-H4 heterotetramer and two H2A-H2B heterodimers. The octamer wraps approximately 147 bp of DNA. In terms of processing, monoubiquitination of Lys-119 gives a specific tag for epigenetic transcriptional repression. Post-translationally, phosphorylation on Ser-2 is enhanced during mitosis. Phosphorylation on Ser-2 directly represses transcription.

The protein resides in the nucleus. It is found in the chromosome. Core component of nucleosome. Nucleosomes wrap and compact DNA into chromatin, limiting DNA accessibility to the cellular machineries which require DNA as a template. Histones thereby play a central role in transcription regulation, DNA repair, DNA replication and chromosomal stability. DNA accessibility is regulated via a complex set of post-translational modifications of histones, also called histone code, and nucleosome remodeling. This chain is Histone H2A, orphon, found in Chironomus thummi thummi (Midge).